The primary structure comprises 115 residues: Hydrogenase maturation factor HypA (115 aa).

H2 contacts Ni(2+). Residues C73, C76, C89, and C92 each contribute to the Zn(2+) site.

The protein belongs to the HypA/HybF family.

Functionally, involved in the maturation of [NiFe] hydrogenases. Required for nickel insertion into the metal center of the hydrogenase. This is Hydrogenase maturation factor HypA from Parabacteroides distasonis (strain ATCC 8503 / DSM 20701 / CIP 104284 / JCM 5825 / NCTC 11152).